The following is a 356-amino-acid chain: Carminomycin 4-O-methyltransferase DauK (356 aa).

Residue R153 participates in S-adenosyl-L-methionine binding. D163 provides a ligand contact to substrate. Residues G187, E210, 237 to 238 (DF), and S252 contribute to the S-adenosyl-L-methionine site. Residues N257 and R303 each coordinate substrate.

The protein belongs to the class I-like SAM-binding methyltransferase superfamily. Cation-independent O-methyltransferase family. As to quaternary structure, homodimer and homotetramer in equilibrium.

It catalyses the reaction carminomycin + S-adenosyl-L-methionine = daunorubicin + S-adenosyl-L-homocysteine + H(+). It functions in the pathway antibiotic biosynthesis; daunorubicin biosynthesis. The protein operates within antibiotic biosynthesis; carminomycin biosynthesis. Its activity is regulated as follows. Strongly inhibited by S-adenosyl-L-homocysteine and weakly by adenine and methionine. Involved in the biosynthesis of the anthracyclines carminomycin and daunorubicin (daunomycin) which are aromatic polyketide antibiotics that exhibit high cytotoxicity and are widely applied in the chemotherapy of a variety of cancers. In vivo, catalyzes the transfer of a methyl group from S-adenosyl-L-methionine to the 4-O-position of carminomycin to form daunorubicin. In vitro, it also methylates the anthracyclines rhodomycin D (10-carbomethoxy-13-deoxycarminomycin), 10-carboxy-13-deoxycarminomycin, 13-deoxy-carminomycin and 13-dihydrocarminomycin at the 4-hydroxyl position. The protein is Carminomycin 4-O-methyltransferase DauK (dauK) of Streptomyces sp. (strain C5).